A 513-amino-acid polypeptide reads, in one-letter code: Ribonuclease Y (513 aa).

A helical transmembrane segment spans residues 6–26 (YIIIAVVIIIICVILGLYVVD). The 86-residue stretch at 203 to 288 (TVHVVNLPND…EMVEKAKKEV (86 aa)) folds into the KH domain. The region spanning 329–422 (VLKHSIEVSH…VQAADAISAA (94 aa)) is the HD domain.

This sequence belongs to the RNase Y family.

Its subcellular location is the cell membrane. In terms of biological role, endoribonuclease that initiates mRNA decay. The chain is Ribonuclease Y from Clostridium botulinum (strain Loch Maree / Type A3).